Here is a 482-residue protein sequence, read N- to C-terminus: Putative fatty acid desaturase 2-like protein FADS2B (482 aa).

The disordered stretch occupies residues Met-1–Pro-31. The Cytoplasmic portion of the chain corresponds to Met-1 to Leu-167. One can recognise a Cytochrome b5 heme-binding domain in the interval Leu-56–Ala-132. Positions 90 and 113 each coordinate heme. The chain crosses the membrane as a helical span at residues Gly-168–Val-188. At Tyr-189–His-190 the chain is on the lumenal side. Residues Phe-191–Ser-211 traverse the membrane as a helical segment. Residues Ser-212 to Lys-305 are Cytoplasmic-facing. Positions His-217 to His-221 match the Histidine box-1 motif. The Histidine box-2 signature appears at His-254–His-258. A helical transmembrane segment spans residues Val-306–Leu-326. Residues Gln-327 to Ser-343 lie on the Lumenal side of the membrane. Residues Phe-344 to Ile-364 form a helical membrane-spanning segment. Topologically, residues Tyr-365–Glu-482 are cytoplasmic. Residues Gln-421 to His-425 carry the Histidine box-3 motif.

It belongs to the fatty acid desaturase type 1 family.

Its subcellular location is the endoplasmic reticulum membrane. The protein operates within lipid metabolism; polyunsaturated fatty acid biosynthesis. This chain is Putative fatty acid desaturase 2-like protein FADS2B, found in Homo sapiens (Human).